A 422-amino-acid chain; its full sequence is Cyclin-A2 (422 aa).

Met-1 is modified (N-acetylmethionine). Positions 1–62 are disordered; sequence MPGTSRHSGR…APQQKLKTRR (62 aa). Ser-5 is modified (phosphoserine).

Belongs to the cyclin family. Cyclin AB subfamily. In terms of assembly, interacts with the CDK1 and CDK2 protein kinases to form serine/threonine kinase holoenzyme complexes. Interacts with CDK1 (hyperphosphorylated form in G1 and underphosphorylated forms in S and G2). Interacts with CDK2; the interaction increases from G1 to G2. Interacts (associated with CDK2 but not with CDK1) with SCAPER; regulates the activity of CCNA2/CDK2 by transiently maintaining CCNA2 in the cytoplasm. Forms a ternary complex with CDK2 and CDKN1B; CDKN1B inhibits the kinase activity of CDK2 through conformational rearrangements. Interacts with INCA1. As to quaternary structure, (Microbial infection) Interacts with mouse cytomegalovirus/MCMV kinase M97; this interaction sequesters CCNA2 to the cytoplasm. Polyubiquitinated via 'Lys-11'-linked ubiquitin by the anaphase-promoting complex (APC/C), leading to its degradation by the proteasome. Deubiquitinated and stabilized by USP37 enables entry into S phase. Ubiquitinated during the G1 phase by the SCF(FBXO31) complex, leading to its proteasomal degradation. Ubiquitous. In the testis, expressed in germ cells and in the ovary, in both germline and somatic cells.

It localises to the nucleus. The protein resides in the cytoplasm. In terms of biological role, cyclin which controls both the G1/S and the G2/M transition phases of the cell cycle. Functions through the formation of specific serine/threonine kinase holoenzyme complexes with the cyclin-dependent protein kinases CDK1 and CDK2. The cyclin subunit confers the substrate specificity of these complexes and differentially interacts with and activates CDK1 and CDK2 throughout the cell cycle. This is Cyclin-A2 from Mus musculus (Mouse).